The sequence spans 291 residues: Methylsterol monooxygenase 1 (291 aa).

2 consecutive transmembrane segments (helical) span residues 55–75 (LIVH…FQFL) and 100–120 (MLLF…YYFT). Residues 145 to 274 (CAVIEDTWHY…FTWWDRLFDT (130 aa)) form the Fatty acid hydroxylase domain. The Histidine box-1 signature appears at 157 to 161 (HRALH). The short motif at 170 to 174 (HKVHH) is the Histidine box-2 element. The helical transmembrane segment at 199–219 (FFIGTMVFCNHMILLWAWVTF) threads the bilayer. The short motif at 249-255 (FHDFHHM) is the Histidine box-3 element.

Belongs to the sterol desaturase family. Fe cation is required as a cofactor.

It localises to the endoplasmic reticulum membrane. The enzyme catalyses 4,4-dimethyl-5alpha-cholest-7-en-3beta-ol + 6 Fe(II)-[cytochrome b5] + 3 O2 + 5 H(+) = 4alpha-carboxy-4beta-methyl-5alpha-cholest-7-ene-3beta-ol + 6 Fe(III)-[cytochrome b5] + 4 H2O. It participates in steroid biosynthesis; zymosterol biosynthesis; zymosterol from lanosterol: step 3/6. Its function is as follows. Catalyzes the first step in the removal of the two C-4 methyl groups of 4,4-dimethylzymosterol. This Danio rerio (Zebrafish) protein is Methylsterol monooxygenase 1 (msmo1).